Consider the following 95-residue polypeptide: Co-chaperonin GroES (95 aa).

The protein belongs to the GroES chaperonin family. As to quaternary structure, heptamer of 7 subunits arranged in a ring. Interacts with the chaperonin GroEL.

The protein resides in the cytoplasm. Together with the chaperonin GroEL, plays an essential role in assisting protein folding. The GroEL-GroES system forms a nano-cage that allows encapsulation of the non-native substrate proteins and provides a physical environment optimized to promote and accelerate protein folding. GroES binds to the apical surface of the GroEL ring, thereby capping the opening of the GroEL channel. In Bordetella avium (strain 197N), this protein is Co-chaperonin GroES.